A 117-amino-acid polypeptide reads, in one-letter code: Fluoride-specific ion channel FluC 2 (117 aa).

4 consecutive transmembrane segments (helical) span residues 1–21 (MITI…RALI), 33–53 (IPIA…FMMG), 61–81 (MFPF…TLSS), and 94–114 (IRFV…CFYG). Na(+) is bound by residues G71 and T74.

The protein belongs to the fluoride channel Fluc/FEX (TC 1.A.43) family.

It localises to the cell membrane. It carries out the reaction fluoride(in) = fluoride(out). Na(+) is not transported, but it plays an essential structural role and its presence is essential for fluoride channel function. Fluoride-specific ion channel. Important for reducing fluoride concentration in the cell, thus reducing its toxicity. This Staphylococcus epidermidis (strain ATCC 35984 / DSM 28319 / BCRC 17069 / CCUG 31568 / BM 3577 / RP62A) protein is Fluoride-specific ion channel FluC 2.